The sequence spans 767 residues: Polyribonucleotide nucleotidyltransferase (767 aa).

Mg(2+) is bound by residues Asp488 and Asp494. The region spanning 555–614 (PRLYTMKINPEKIRDVIGKGGSVIRALTEETGCQIDIGEDGTITIASTDADKAELAKKRI) is the KH domain. One can recognise an S1 motif domain in the interval 624–692 (GKVYEGPVVK…EKGRIKLSMK (69 aa)). Residues 700–742 (GMEFEERAPRREGGFGDRGDRGDRGPRRDRGGDRPERGERPAR) show a composition bias toward basic and acidic residues. The interval 700–767 (GMEFEERAPR…QPQQQQGQQQ (68 aa)) is disordered. Low complexity predominate over residues 752 to 767 (GAPAAGQPQQQQGQQQ).

The protein belongs to the polyribonucleotide nucleotidyltransferase family. Mg(2+) serves as cofactor.

It is found in the cytoplasm. It catalyses the reaction RNA(n+1) + phosphate = RNA(n) + a ribonucleoside 5'-diphosphate. Functionally, involved in mRNA degradation. Catalyzes the phosphorolysis of single-stranded polyribonucleotides processively in the 3'- to 5'-direction. This chain is Polyribonucleotide nucleotidyltransferase, found in Leptothrix cholodnii (strain ATCC 51168 / LMG 8142 / SP-6) (Leptothrix discophora (strain SP-6)).